Reading from the N-terminus, the 127-residue chain is Interacting with cytoskeleton protein 1 (127 aa).

The protein localises to the vacuole membrane. Its function is as follows. Required for viability of cells lacking mtDNA. This is Interacting with cytoskeleton protein 1 (ICY1) from Saccharomyces cerevisiae (strain ATCC 204508 / S288c) (Baker's yeast).